The following is a 121-amino-acid chain: Insulin-like peptide 01 (121 aa).

A signal peptide spans 1 to 24 (MDSFTRASLITFLILLTLTSLVFS). Residues 25-45 (NGCMMRGGCFKTSEDAHRLIM) constitute a propeptide that is removed on maturation. 3 disulfides stabilise this stretch: Cys-52/Cys-107, Cys-64/Cys-120, and Cys-106/Cys-111. Residues 69–97 (RRRKRDLRRKLGIVMDRKESHKFLRRRKR) constitute a propeptide, c peptide.

Belongs to the insulin family.

It is found in the secreted. Insulin decreases blood glucose concentration. May have evolved to activate insulin receptors (INSR) in vertebrates. Molecular docking studies reveals unique interaction with the human insulin receptor. In vivo, insulin-like peptide injection reduces blood glucose levels in two models of zebrafish diabetes (streptozotocin- and glucose-induced). Also shorter swimming distance of zebrafish larvae, an effect which is not observed with human insulin. The protein is Insulin-like peptide 01 of Exaiptasia diaphana (Tropical sea anemone).